Reading from the N-terminus, the 409-residue chain is Serine/threonine transporter SstT (409 aa).

The next 9 membrane-spanning stretches (helical) occupy residues 17 to 37, 49 to 69, 83 to 103, 142 to 162, 180 to 200, 218 to 238, 301 to 321, 331 to 351, and 357 to 377; these read LVGQIIVGLIAGLLLASFFPA, FVSALKAVAPVLVFVLVMASI, ILLLYLVGTFSAAVVAVIASF, ALISANFIGILAWAIGLGIAF, VSLIVKVVIRFAPLGIFGLVA, LVVLLGCMLFVAFVVNPLIVF, GAAITITVLTLAAVHTLGIAV, VVASVCACGASGVAGGSLLLI, and LFGIPSEVAMQVVAVGFIIAI.

It belongs to the dicarboxylate/amino acid:cation symporter (DAACS) (TC 2.A.23) family.

It is found in the cell inner membrane. The enzyme catalyses L-serine(in) + Na(+)(in) = L-serine(out) + Na(+)(out). The catalysed reaction is L-threonine(in) + Na(+)(in) = L-threonine(out) + Na(+)(out). Functionally, involved in the import of serine and threonine into the cell, with the concomitant import of sodium (symport system). In Pseudomonas aeruginosa (strain UCBPP-PA14), this protein is Serine/threonine transporter SstT.